Reading from the N-terminus, the 476-residue chain is Nitrosuccinate lyase (476 aa).

Residues Arg-137, Arg-140, and Arg-201 each contribute to the fumarate site. Ser-302 serves as the catalytic Proton acceptor. Lys-308 and Asn-310 together coordinate fumarate. Arg-341 acts as the Proton donor in catalysis.

The protein belongs to the class-II fumarase/aspartase family. As to quaternary structure, homotetramer.

The catalysed reaction is 2-nitrobutanedioate = fumarate + nitrite + H(+). The protein operates within antibiotic biosynthesis. Its function is as follows. Part of a gene cluster involved in the biosynthesis of cremeomycin, a light-sensitive o-diazoquinone with antibacterial and antiproliferative effects. Catalyzes the formation of nitrous acid from nitrosuccinic acid (2-nitrobutanedioate) by elimination of its nitro group. The chain is Nitrosuccinate lyase from Streptomyces cremeus.